The following is a 360-amino-acid chain: Photosystem II protein D1 (360 aa).

Helical transmembrane passes span 29–46 (YIGW…TATS), 118–133 (HFLT…EWEL), and 142–156 (WISV…AAAA). H118 serves as a coordination point for chlorophyll a. Residue Y126 participates in pheophytin a binding. Residues D170 and E189 each contribute to the [CaMn4O5] cluster site. Residues 197–218 (FHQLGVAGVFGGSLFSAMHGSL) form a helical membrane-spanning segment. H198 contributes to the chlorophyll a binding site. Residues H215 and 264-265 (SF) each bind a quinone. H215 contributes to the Fe cation binding site. H272 contributes to the Fe cation binding site. The helical transmembrane segment at 274 to 288 (FLGLWPVVGIWLTAL) threads the bilayer. [CaMn4O5] cluster is bound by residues H332, E333, D342, and A344. Positions 345–360 (SGESLPVALTAPAVNG) are excised as a propeptide.

This sequence belongs to the reaction center PufL/M/PsbA/D family. In terms of assembly, PSII is composed of 1 copy each of membrane proteins PsbA, PsbB, PsbC, PsbD, PsbE, PsbF, PsbH, PsbI, PsbJ, PsbK, PsbL, PsbM, PsbT, PsbX, PsbY, PsbZ, Psb30/Ycf12, at least 3 peripheral proteins of the oxygen-evolving complex and a large number of cofactors. It forms dimeric complexes. Requires The D1/D2 heterodimer binds P680, chlorophylls that are the primary electron donor of PSII, and subsequent electron acceptors. It shares a non-heme iron and each subunit binds pheophytin, quinone, additional chlorophylls, carotenoids and lipids. D1 provides most of the ligands for the Mn4-Ca-O5 cluster of the oxygen-evolving complex (OEC). There is also a Cl(-1) ion associated with D1 and D2, which is required for oxygen evolution. The PSII complex binds additional chlorophylls, carotenoids and specific lipids. as cofactor. Tyr-161 forms a radical intermediate that is referred to as redox-active TyrZ, YZ or Y-Z. Post-translationally, C-terminally processed by CTPA; processing is essential to allow assembly of the oxygen-evolving complex and thus photosynthetic growth.

It localises to the plastid. The protein localises to the chloroplast thylakoid membrane. It carries out the reaction 2 a plastoquinone + 4 hnu + 2 H2O = 2 a plastoquinol + O2. Photosystem II (PSII) is a light-driven water:plastoquinone oxidoreductase that uses light energy to abstract electrons from H(2)O, generating O(2) and a proton gradient subsequently used for ATP formation. It consists of a core antenna complex that captures photons, and an electron transfer chain that converts photonic excitation into a charge separation. The D1/D2 (PsbA/PsbD) reaction center heterodimer binds P680, the primary electron donor of PSII as well as several subsequent electron acceptors. The polypeptide is Photosystem II protein D1 (Pyropia yezoensis (Susabi-nori)).